Reading from the N-terminus, the 349-residue chain is Twinfilin-2 (349 aa).

2 consecutive ADF-H domains span residues Gln4–Ser139 and Gly177–His313. The disordered stretch occupies residues Ala324–Ser349.

This sequence belongs to the actin-binding proteins ADF family. Twinfilin subfamily. In terms of assembly, interacts with G-actin; ADP-actin form and capping protein (CP).

The protein localises to the cytoplasm. The protein resides in the cytoskeleton. Its subcellular location is the perinuclear region. Actin-binding protein involved in motile and morphological processes. Inhibits actin polymerization, likely by sequestering G-actin. The chain is Twinfilin-2 (TWF2) from Gallus gallus (Chicken).